We begin with the raw amino-acid sequence, 231 residues long: NADH-quinone oxidoreductase subunit C (231 aa).

The protein belongs to the complex I 30 kDa subunit family. As to quaternary structure, NDH-1 is composed of 14 different subunits. Subunits NuoB, C, D, E, F, and G constitute the peripheral sector of the complex.

The protein localises to the cell membrane. The enzyme catalyses a quinone + NADH + 5 H(+)(in) = a quinol + NAD(+) + 4 H(+)(out). Its function is as follows. NDH-1 shuttles electrons from NADH, via FMN and iron-sulfur (Fe-S) centers, to quinones in the respiratory chain. The immediate electron acceptor for the enzyme in this species is believed to be a menaquinone. Couples the redox reaction to proton translocation (for every two electrons transferred, four hydrogen ions are translocated across the cytoplasmic membrane), and thus conserves the redox energy in a proton gradient. The sequence is that of NADH-quinone oxidoreductase subunit C from Mycobacterium sp. (strain JLS).